The primary structure comprises 503 residues: Maturase K (503 aa).

This sequence belongs to the intron maturase 2 family. MatK subfamily.

The protein resides in the plastid. It is found in the chloroplast. Usually encoded in the trnK tRNA gene intron. Probably assists in splicing its own and other chloroplast group II introns. The sequence is that of Maturase K from Rosa gigantea (Giant tea rose).